Here is an 847-residue protein sequence, read N- to C-terminus: Glucans biosynthesis glucosyltransferase H (847 aa).

At 1–138 (MNKTTEYIDA…KWRTVGTIRR (138 aa)) the chain is on the cytoplasmic side. Residues 139–156 (YILLILTLAQTVVATWYM) traverse the membrane as a helical segment. Residues 157 to 193 (KTILPYQGWALINPMDMVGQDIWVSFMQLLPYMLQTG) lie on the Periplasmic side of the membrane. A helical membrane pass occupies residues 194 to 216 (ILILFAVLFCWVSAGFWTALMGF). The Cytoplasmic portion of the chain corresponds to 217 to 511 (LQLLIGRDKY…LVKGMHPVHR (295 aa)). A helical membrane pass occupies residues 512 to 534 (AVFLTGVMSYLSAPLWFMFLALS). The Periplasmic segment spans residues 535-567 (TALQVVHALTEPQYFLQPRQLFPVWPQWRPELA). A helical transmembrane segment spans residues 568–590 (IALFASTMVLLFLPKLLSIMLIW). At 591-602 (CKGTKEYGGFWR) the chain is on the cytoplasmic side. A helical membrane pass occupies residues 603–625 (VTLSLLLEVLFSVLLAPVRMLFH). Topologically, residues 626–679 (TVFVVSAFLGWEVVWNSPQRDDDSTPWGEAFMRHGSQLLLGLVWAVGMAWLDLR) are periplasmic. Residues 680 to 702 (FLFWLAPIVFSLILSPFVSVISS) traverse the membrane as a helical segment. The Cytoplasmic segment spans residues 703–847 (RSTVGLRTKR…ALQGRTSSAR (145 aa)).

Belongs to the glycosyltransferase 2 family. OpgH subfamily.

Its subcellular location is the cell inner membrane. Its pathway is glycan metabolism; osmoregulated periplasmic glucan (OPG) biosynthesis. In terms of biological role, involved in the biosynthesis of osmoregulated periplasmic glucans (OPGs). This Salmonella typhimurium (strain LT2 / SGSC1412 / ATCC 700720) protein is Glucans biosynthesis glucosyltransferase H.